The following is a 382-amino-acid chain: Lipid-A-disaccharide synthase (382 aa).

This sequence belongs to the LpxB family.

The catalysed reaction is 2-N,3-O-bis[(3R)-3-hydroxytetradecanoyl]-alpha-D-glucosaminyl 1-phosphate + UDP-2-N,3-O-bis[(3R)-3-hydroxytetradecanoyl]-alpha-D-glucosamine = lipid A disaccharide (E. coli) + UDP + H(+). It catalyses the reaction a lipid X + a UDP-2-N,3-O-bis[(3R)-3-hydroxyacyl]-alpha-D-glucosamine = a lipid A disaccharide + UDP + H(+). Its pathway is glycolipid biosynthesis; lipid IV(A) biosynthesis; lipid IV(A) from (3R)-3-hydroxytetradecanoyl-[acyl-carrier-protein] and UDP-N-acetyl-alpha-D-glucosamine: step 5/6. Condensation of UDP-2,3-diacylglucosamine and 2,3-diacylglucosamine-1-phosphate to form lipid A disaccharide, a precursor of lipid A, a phosphorylated glycolipid that anchors the lipopolysaccharide to the outer membrane of the cell. This chain is Lipid-A-disaccharide synthase, found in Shigella flexneri serotype 5b (strain 8401).